The following is a 150-amino-acid chain: UPF0178 protein PputW619_5044 (150 aa).

This sequence belongs to the UPF0178 family.

The chain is UPF0178 protein PputW619_5044 from Pseudomonas putida (strain W619).